Here is a 65-residue protein sequence, read N- to C-terminus: LTCFNCPEVYCNRFHTCRNGEKICFKRFNERKLLGKRYTRGCAATCPVAKPREIVECCSTDRCNH.

5 cysteine pairs are disulfide-bonded: Cys3/Cys24, Cys6/Cys11, Cys17/Cys42, Cys46/Cys57, and Cys58/Cys63.

The protein belongs to the three-finger toxin family. Ancestral subfamily. Orphan group II sub-subfamily. In terms of tissue distribution, expressed by the venom gland.

The protein resides in the secreted. In terms of biological role, binds with low affinity to muscular (alpha-1-beta-1-delta-epsilon/CHRNA1-CHRNB1-CHRND-CHRNE) and very low affinity to neuronal (alpha-7/CHRNA7) nicotinic acetylcholine receptor (nAChR). The polypeptide is Weak toxin CM-13b (Naja annulifera (Banded Egyptian cobra)).